Consider the following 609-residue polypeptide: MSCFYLDLLKIKDPSFMKQLDIQELEALAADIRAFLITSTSKSGGHIGPNLGVVELTIALHYSFNSPKDKFIWDVGHQSYVHKILTGRASQFGTLREHGGLDGFPKRKESIHDVFETGHSSTSLSAAAGMVIARDIKKEEFYVIPIIGDGALTGGMALEALNHIGDMGKDMIVILNDNDMSIAPNVGAIHNILGKLRTSDTFKQTKAKVDGTFFEELGFMYLGPINGHDIEEVITNLELAKRTKGPVLLHIVTKKGKGYQPAELDSRGTWHGTGPYKVETGSFIKPAKRAASWSSVISNELIRLAEKDERIVAITPAMPVGSKLEKFAKAFPERFFDVGIAEQHATTMAAGLATQGMKPFLTIYSTFLQRAYDQLVHDVCRQKLNVVIGIDRAGLVGADGETHQGIFDISFLNSIPNMTISMPKDEVEARQLMDTAFSYNDGPFAIRYPRGEAPGAQVAESNTLIPIGKWETIIQPIDAVILTFGPTIRLALKAAEQLELEGYHVGVINARYIKPLDEALLHQILKQKIPILTVEESLLKGGFGASVLEFIEASNYSDVVMHRIGLPDEFISHGSVSIILESFGISTTGIVLKIKEMLAQSGKLRAKRL.

Thiamine diphosphate contacts are provided by residues H77 and 118–120 (GHS). D149 provides a ligand contact to Mg(2+). Thiamine diphosphate contacts are provided by residues 150-151 (GA), N178, Y259, and E342. Position 178 (N178) interacts with Mg(2+).

This sequence belongs to the transketolase family. DXPS subfamily. In terms of assembly, homodimer. Requires Mg(2+) as cofactor. It depends on thiamine diphosphate as a cofactor.

The catalysed reaction is D-glyceraldehyde 3-phosphate + pyruvate + H(+) = 1-deoxy-D-xylulose 5-phosphate + CO2. It functions in the pathway metabolic intermediate biosynthesis; 1-deoxy-D-xylulose 5-phosphate biosynthesis; 1-deoxy-D-xylulose 5-phosphate from D-glyceraldehyde 3-phosphate and pyruvate: step 1/1. Catalyzes the acyloin condensation reaction between C atoms 2 and 3 of pyruvate and glyceraldehyde 3-phosphate to yield 1-deoxy-D-xylulose-5-phosphate (DXP). This chain is 1-deoxy-D-xylulose-5-phosphate synthase, found in Listeria monocytogenes serotype 4b (strain CLIP80459).